Consider the following 423-residue polypeptide: ATP-citrate synthase alpha chain protein 2 (423 aa).

Citrate-binding residues include asparagine 343, threonine 345, and arginine 376.

Belongs to the succinate/malate CoA ligase beta subunit family. In terms of assembly, heterooctamer of 4 alpha and 4 beta chains.

It localises to the cytoplasm. It is found in the cytosol. It catalyses the reaction oxaloacetate + acetyl-CoA + ADP + phosphate = citrate + ATP + CoA. ATP citrate-lyase is the primary enzyme responsible for the synthesis of cytosolic acetyl-CoA, used for the elongation of fatty acids and biosynthesis of isoprenoids, flavonoids and malonated derivatives. May supply substrate to the cytosolic acetyl-CoA carboxylase, which generates the malonyl-CoA used for the synthesis of a multitude of compounds, including very long chain fatty acids and flavonoids. Required for normal growth and development and elongation of C18 fatty acids to C20 to C24 fatty acids in seeds. In contrast to all known animal ACL enzymes having a homomeric structure, plant ACLs are composed of alpha and beta chains. The polypeptide is ATP-citrate synthase alpha chain protein 2 (ACLA-2) (Arabidopsis thaliana (Mouse-ear cress)).